The chain runs to 128 residues: Large-conductance mechanosensitive channel (128 aa).

Transmembrane regions (helical) follow at residues 11–31 (FALKGNVLDLAVAVVIGAAFG) and 70–90 (GAFIQSIVDFVIIAFAIFIFV).

It belongs to the MscL family. As to quaternary structure, homopentamer.

The protein resides in the cell membrane. Its function is as follows. Channel that opens in response to stretch forces in the membrane lipid bilayer. May participate in the regulation of osmotic pressure changes within the cell. In Listeria monocytogenes serotype 4b (strain CLIP80459), this protein is Large-conductance mechanosensitive channel.